We begin with the raw amino-acid sequence, 562 residues long: Probable malate:quinone oxidoreductase (562 aa).

The segment at 530–562 (EVPDKSATPPDPTIAPKHQHSPTHNANSEMQAL) is disordered. The span at 551 to 562 (PTHNANSEMQAL) shows a compositional bias: polar residues.

This sequence belongs to the MQO family. It depends on FAD as a cofactor.

It carries out the reaction (S)-malate + a quinone = a quinol + oxaloacetate. It participates in carbohydrate metabolism; tricarboxylic acid cycle; oxaloacetate from (S)-malate (quinone route): step 1/1. This is Probable malate:quinone oxidoreductase from Xylella fastidiosa (strain 9a5c).